The primary structure comprises 378 residues: Transmembrane 6 superfamily member 2 (378 aa).

Helical transmembrane passes span 10-30 (TVAMSFCALPVSYLLNQVSAF), 34-54 (LFVVLTSALILGLLFLAVYSL), 63-83 (PLYAVFVIFSFTSVVDLVIAL), 110-130 (IFICYWDGTVHYLLYLTMAGA), 140-160 (LGLYWLGSFAMSILVFLPGNI), 170-190 (PTFFLAILYMLVPCWAGVRIF), 219-239 (LALIVYLIFAALFTVFRGLVV), 269-289 (MLMYLFYALPFYCLAAYALAF), 291-311 (GCSWLPDWALVFAGAIGQAQF), and 332-352 (TWATFFLSNLLLALGPHLLAF). 2 consecutive EXPERA domains span residues 61–186 (YDPL…CWAG) and 217–351 (ADLA…HLLA).

The protein belongs to the TM6SF family. Highly expressed in the liver at both the mRNA and protein levels.

It localises to the endoplasmic reticulum membrane. Its subcellular location is the endoplasmic reticulum-Golgi intermediate compartment membrane. Functionally, regulator of liver fat metabolism influencing triglyceride secretion and hepatic lipid droplet content. May function as sterol isomerase. The protein is Transmembrane 6 superfamily member 2 (Tm6sf2) of Mus musculus (Mouse).